We begin with the raw amino-acid sequence, 451 residues long: Chromosomal replication initiator protein DnaA (451 aa).

The segment at 1-101 (MTENETIFWN…TSNHIFSRQT (101 aa)) is domain I, interacts with DnaA modulators. Residues 101–110 (TINSLPAITS) form a domain II region. Positions 111–329 (DLNPKYSFDN…GALKDISLVA (219 aa)) are domain III, AAA+ region. ATP contacts are provided by glycine 155, glycine 157, lysine 158, and threonine 159. Positions 330-451 (NFKEIDKITV…EIETIKNKIK (122 aa)) are domain IV, binds dsDNA.

It belongs to the DnaA family. In terms of assembly, oligomerizes as a right-handed, spiral filament on DNA at oriC.

Its subcellular location is the cytoplasm. In terms of biological role, plays an essential role in the initiation and regulation of chromosomal replication. ATP-DnaA binds to the origin of replication (oriC) to initiate formation of the DNA replication initiation complex once per cell cycle. Binds the DnaA box (a 9 base pair repeat at the origin) and separates the double-stranded (ds)DNA. Forms a right-handed helical filament on oriC DNA; dsDNA binds to the exterior of the filament while single-stranded (ss)DNA is stabiized in the filament's interior. The ATP-DnaA-oriC complex binds and stabilizes one strand of the AT-rich DNA unwinding element (DUE), permitting loading of DNA polymerase. After initiation quickly degrades to an ADP-DnaA complex that is not apt for DNA replication. Binds acidic phospholipids. The sequence is that of Chromosomal replication initiator protein DnaA from Streptococcus uberis (strain ATCC BAA-854 / 0140J).